Reading from the N-terminus, the 265-residue chain is Gamma-secretase subunit APH-1A (265 aa).

Topologically, residues 1–2 (MG) are lumenal. The chain crosses the membrane as a helical span at residues 3–23 (AAVFFGCTFVAFGPAFALFLI). Topologically, residues 24–31 (TVAGDPLR) are cytoplasmic. The chain crosses the membrane as a helical span at residues 32–52 (VIILVAGAFFWLVSLLLASVV). At 53–68 (WFILVHVTDRSDARLQ) the chain is on the lumenal side. Residues 69–89 (YGLLIFGAAVSVLLQEVFRFA) form a helical membrane-spanning segment. At 90–118 (YYKLLKKADEGLASLSEDGRSPISIRQMA) the chain is on the cytoplasmic side. Residues 119-139 (YVSGLSFGIISGVFSVINILA) traverse the membrane as a helical segment. Residues 140–158 (DALGPGVVGIHGDSPYYFL) lie on the Lumenal side of the membrane. A helical transmembrane segment spans residues 159-179 (TSAFLTAAIILLHTFWGVVFF). Over 180–186 (DACERRR) the chain is Cytoplasmic. A helical transmembrane segment spans residues 187–207 (YWALGLVVGSHLLTSGLTFLN). The Lumenal segment spans residues 208–213 (PWYEAS). The chain crosses the membrane as a helical span at residues 214–234 (LLPIYAVTVSMGLWAFITAGG). Residues 235 to 265 (SLRSIQRSLLCRRQEDSRVMVYSALRIPPED) are Cytoplasmic-facing.

It belongs to the APH-1 family. The functional gamma-secretase complex is composed of at least four polypeptides: a presenilin homodimer (PSEN1 or PSEN2), nicastrin (NCSTN), APH1 (APH1A or APH1B) and PSENEN/PEN2. Widely expressed. Expressed in leukocytes, lung, placenta, small intestine, liver, kidney, spleen thymus, skeletal muscle, heart and brain. Isoform 1 and isoform 2 are nearly expressed at the same level.

Its subcellular location is the endoplasmic reticulum membrane. The protein resides in the golgi apparatus. It is found in the golgi stack membrane. Non-catalytic subunit of the gamma-secretase complex, an endoprotease complex that catalyzes the intramembrane cleavage of integral membrane proteins such as Notch receptors and APP (amyloid-beta precursor protein). Required for normal gamma-secretase assembly. The gamma-secretase complex plays a role in Notch and Wnt signaling cascades and regulation of downstream processes via its role in processing key regulatory proteins, and by regulating cytosolic CTNNB1 levels. The polypeptide is Gamma-secretase subunit APH-1A (APH1A) (Homo sapiens (Human)).